The following is a 432-amino-acid chain: Adenylosuccinate synthetase (432 aa).

Residues 12 to 18 and 40 to 42 each bind GTP; these read GDEGKGK and GHT. The Proton acceptor role is filled by aspartate 13. 2 residues coordinate Mg(2+): aspartate 13 and glycine 40. Residues 13–16, 38–41, threonine 129, arginine 143, glutamine 224, threonine 239, and arginine 303 contribute to the IMP site; these read DEGK and NAGH. Residue histidine 41 is the Proton donor of the active site. A substrate-binding site is contributed by 299-305; the sequence is VTTGRRR. Residues arginine 305, 331 to 333, and 413 to 415 each bind GTP; these read KLD and GVG.

The protein belongs to the adenylosuccinate synthetase family. As to quaternary structure, homodimer. Requires Mg(2+) as cofactor.

The protein resides in the cytoplasm. The enzyme catalyses IMP + L-aspartate + GTP = N(6)-(1,2-dicarboxyethyl)-AMP + GDP + phosphate + 2 H(+). The protein operates within purine metabolism; AMP biosynthesis via de novo pathway; AMP from IMP: step 1/2. In terms of biological role, plays an important role in the de novo pathway of purine nucleotide biosynthesis. Catalyzes the first committed step in the biosynthesis of AMP from IMP. This Mycobacterium tuberculosis (strain CDC 1551 / Oshkosh) protein is Adenylosuccinate synthetase.